The chain runs to 551 residues: High-affinity glucose transporter (551 aa).

At 1-27 (MSLKNWLLLRDIQYEGTFYKKFPHVYN) the chain is on the cytoplasmic side. The chain crosses the membrane as a helical span at residues 28 to 48 (IYVIGFIACISGLMFGFDIAS). The Extracellular portion of the chain corresponds to 49 to 70 (MSSMIGTDVYKDYFSNPDSLTY). A helical membrane pass occupies residues 71–91 (GGITASMAGGSFLGSLISPNF). The Cytoplasmic segment spans residues 92–98 (SDAFGRK). The chain crosses the membrane as a helical span at residues 99–119 (VSLHICAALWIIGAILQCAAQ). The Extracellular segment spans residues 120–123 (DQAM). Residues 124–144 (LIVGRVISGMGIGFGSSAAPV) form a helical membrane-spanning segment. Residues 145–155 (YCSEISPPKIR) lie on the Cytoplasmic side of the membrane. A helical transmembrane segment spans residues 156 to 176 (GTISGLFQFSVTVGIMVLFYI). Residues 177-190 (GYGCHFIDGAAAFR) lie on the Extracellular side of the membrane. A helical transmembrane segment spans residues 191-211 (ITWGLQMVPGLILMVGVFFIP). Topologically, residues 212 to 289 (ESPRWLANHD…VGVSAQMWQQ (78 aa)) are cytoplasmic. Residues 290–310 (LCGMNVMMYYIVYIFNMAGYT) traverse the membrane as a helical segment. Over 311–315 (GNTNL) the chain is Extracellular. Residues 316 to 336 (VASSIQYVLNVVMTIPALFLI) traverse the membrane as a helical segment. Over 337 to 343 (DKFGRRP) the chain is Cytoplasmic. Residues 344 to 364 (VLIIGGIFMFTWLFSVAGILA) traverse the membrane as a helical segment. Residues 365–395 (TYSVPAPGGVNGDDTVTIQIPSENTSAANGV) lie on the Extracellular side of the membrane. The N-linked (GlcNAc...) asparagine glycan is linked to Asn388. The helical transmembrane segment at 396–416 (IASSYLFVCFFAPTWGIGIWI) threads the bilayer. Residues 417–432 (YCSEIFNNMERAKGSA) lie on the Cytoplasmic side of the membrane. Residues 433 to 453 (LSAATNWAFNFALAMFVPSAF) traverse the membrane as a helical segment. Topologically, residues 454 to 459 (KNISWK) are extracellular. The helical transmembrane segment at 460–480 (TYIIFGVFSVALTIQTFFMFP) threads the bilayer. Residues 481–551 (ETKGKTLEEI…DRSDSASNSN (71 aa)) lie on the Cytoplasmic side of the membrane.

The protein belongs to the major facilitator superfamily. Sugar transporter (TC 2.A.1.1) family.

The protein resides in the membrane. Its function is as follows. High-affinity glucose transporter. The chain is High-affinity glucose transporter (HGT1) from Kluyveromyces lactis (strain ATCC 8585 / CBS 2359 / DSM 70799 / NBRC 1267 / NRRL Y-1140 / WM37) (Yeast).